Reading from the N-terminus, the 802-residue chain is Chondroitin sulfate synthase 1 (802 aa).

The Cytoplasmic portion of the chain corresponds to 1 to 7 (MAARGRR). The chain crosses the membrane as a helical; Signal-anchor for type II membrane protein span at residues 8–28 (AWLSVLLGLVLGFVLASRLVL). The Lumenal portion of the chain corresponds to 29 to 802 (PRASELKRAG…SNNNGSVRTA (774 aa)). The segment at 34-82 (LKRAGPRRRASPEGCRSGQAAASQAGGARGDARGAQLWPPGSDPDGGPR) is disordered. Composition is skewed to low complexity over residues 49–59 (RSGQAAASQAG) and 66–78 (RGAQ…SDPD). N-linked (GlcNAc...) asparagine glycans are attached at residues asparagine 189 and asparagine 623. 2 residues coordinate a divalent metal cation: aspartate 633 and histidine 747. Residue asparagine 796 is glycosylated (N-linked (GlcNAc...) asparagine).

It belongs to the chondroitin N-acetylgalactosaminyltransferase family. The cofactor is Co(2+). It depends on Mn(2+) as a cofactor. Requires Cd(2+) as cofactor. Ubiquitous, with the highest levels in placenta. Detected at low levels in brain, heart, skeletal muscle, colon, thymus, spleen, kidney, liver, adrenal gland, mammary gland, stomach, small intestine, lung and peripheral blood leukocytes.

It is found in the golgi apparatus. The protein localises to the golgi stack membrane. It localises to the secreted. It catalyses the reaction 3-O-(beta-D-GlcA-(1-&gt;3)-beta-D-GalNAc-(1-&gt;4)-beta-D-GlcA-(1-&gt;3)-beta-D-Gal-(1-&gt;3)-beta-D-Gal-(1-&gt;4)-beta-D-Xyl)-L-seryl-[protein] + UDP-N-acetyl-alpha-D-galactosamine = 3-O-(beta-D-GalNAc-(1-&gt;4)-beta-D-GlcA-(1-&gt;3)-beta-D-GalNAc-(1-&gt;4)-beta-D-GlcA-(1-&gt;3)-beta-D-Gal-(1-&gt;3)-beta-D-Gal-(1-&gt;4)-beta-D-Xyl)-L-seryl-[protein] + UDP + H(+). The enzyme catalyses 3-O-{beta-D-GlcA-(1-&gt;3)-[beta-D-GalNAc-(1-&gt;4)-beta-D-GlcA-(1-&gt;3)](n)-beta-D-GalNAc-(1-&gt;4)-beta-D-GlcA-(1-&gt;3)-beta-D-Gal-(1-&gt;3)-beta-D-Gal-(1-&gt;4)-beta-D-Xyl}-L-seryl-[protein] + UDP-N-acetyl-alpha-D-galactosamine = 3-O-{[beta-D-GalNAc-(1-&gt;4)-beta-D-GlcA-(1-&gt;3)](n+1)-beta-D-GalNAc-(1-&gt;4)-beta-D-GlcA-(1-&gt;3)-beta-D-Gal-(1-&gt;3)-beta-D-Gal-(1-&gt;4)-beta-D-Xyl}-L-seryl-[protein] + UDP + H(+). It carries out the reaction 3-O-(beta-D-GalNAc-(1-&gt;4)-beta-D-GlcA-(1-&gt;3)-beta-D-Gal-(1-&gt;3)-beta-D-Gal-(1-&gt;4)-beta-D-Xyl)-L-seryl-[protein] + UDP-alpha-D-glucuronate = 3-O-(beta-D-GlcA-(1-&gt;3)-beta-D-GalNAc-(1-&gt;4)-beta-D-GlcA-(1-&gt;3)-beta-D-Gal-(1-&gt;3)-beta-D-Gal-(1-&gt;4)-beta-D-Xyl)-L-seryl-[protein] + UDP + H(+). The catalysed reaction is 3-O-{[beta-D-GalNAc-(1-&gt;4)-beta-D-GlcA-(1-&gt;3)](n)-beta-D-GalNAc-(1-&gt;4)-beta-D-GlcA-(1-&gt;3)-beta-D-Gal-(1-&gt;3)-beta-D-Gal-(1-&gt;4)-beta-D-Xyl}-L-seryl-[protein] + UDP-alpha-D-glucuronate = 3-O-{beta-D-GlcA-(1-&gt;3)-[beta-D-GalNAc-(1-&gt;4)-beta-D-GlcA-(1-&gt;3)](n)-beta-D-GalNAc-(1-&gt;4)-beta-D-GlcA-(1-&gt;3)-beta-D-Gal-(1-&gt;3)-beta-D-Gal-(1-&gt;4)-beta-D-Xyl}-L-seryl-[protein] + UDP + H(+). Its function is as follows. Has both beta-1,3-glucuronic acid and beta-1,4-N-acetylgalactosamine transferase activity. Transfers glucuronic acid (GlcUA) from UDP-GlcUA and N-acetylgalactosamine (GalNAc) from UDP-GalNAc to the non-reducing end of the elongating chondroitin polymer. Involved in the negative control of osteogenesis likely through the modulation of NOTCH signaling. This is Chondroitin sulfate synthase 1 from Homo sapiens (Human).